The sequence spans 127 residues: Prophage antitermination protein Q homolog QuuD (127 aa).

It belongs to the phage antitermination Q type 1 family.

In terms of biological role, positively regulate expression of some phage genes. Bacterial host RNA polymerase modified by antitermination proteins transcribes through termination sites that otherwise prevent expression of the regulated genes. In Escherichia coli (strain K12), this protein is Prophage antitermination protein Q homolog QuuD (quuD).